Consider the following 497-residue polypeptide: Glutamyl-tRNA(Gln) amidotransferase subunit A (497 aa).

Residues K75 and S150 each act as charge relay system in the active site. S174 acts as the Acyl-ester intermediate in catalysis.

The protein belongs to the amidase family. GatA subfamily. In terms of assembly, heterotrimer of A, B and C subunits.

The enzyme catalyses L-glutamyl-tRNA(Gln) + L-glutamine + ATP + H2O = L-glutaminyl-tRNA(Gln) + L-glutamate + ADP + phosphate + H(+). In terms of biological role, allows the formation of correctly charged Gln-tRNA(Gln) through the transamidation of misacylated Glu-tRNA(Gln) in organisms which lack glutaminyl-tRNA synthetase. The reaction takes place in the presence of glutamine and ATP through an activated gamma-phospho-Glu-tRNA(Gln). The protein is Glutamyl-tRNA(Gln) amidotransferase subunit A of Paraburkholderia phymatum (strain DSM 17167 / CIP 108236 / LMG 21445 / STM815) (Burkholderia phymatum).